A 407-amino-acid chain; its full sequence is S-adenosylmethionine synthase (407 aa).

ATP is bound at residue histidine 19. A Mg(2+)-binding site is contributed by aspartate 21. Residue glutamate 47 participates in K(+) binding. L-methionine is bound by residues glutamate 60 and glutamine 103. Residues 103–113 form a flexible loop region; sequence QSQEIADGVDN. The interval 107–134 is disordered; it reads IADGVDNSDEARTNGDVEEDDRAGAGDQ. ATP contacts are provided by residues 178 to 180, aspartate 258, 264 to 265, alanine 281, and lysine 285; these read DGK and RK. Aspartate 258 is an L-methionine binding site. Lysine 289 is a binding site for L-methionine.

This sequence belongs to the AdoMet synthase family. In terms of assembly, homotetramer; dimer of dimers. Mg(2+) serves as cofactor. It depends on K(+) as a cofactor.

It localises to the cytoplasm. It carries out the reaction L-methionine + ATP + H2O = S-adenosyl-L-methionine + phosphate + diphosphate. Its pathway is amino-acid biosynthesis; S-adenosyl-L-methionine biosynthesis; S-adenosyl-L-methionine from L-methionine: step 1/1. Catalyzes the formation of S-adenosylmethionine (AdoMet) from methionine and ATP. The overall synthetic reaction is composed of two sequential steps, AdoMet formation and the subsequent tripolyphosphate hydrolysis which occurs prior to release of AdoMet from the enzyme. The sequence is that of S-adenosylmethionine synthase from Corynebacterium glutamicum (strain ATCC 13032 / DSM 20300 / JCM 1318 / BCRC 11384 / CCUG 27702 / LMG 3730 / NBRC 12168 / NCIMB 10025 / NRRL B-2784 / 534).